A 604-amino-acid chain; its full sequence is Cytosolic Fe-S cluster assembly factor nar1 (604 aa).

[4Fe-4S] cluster contacts are provided by cysteine 20, cysteine 62, cysteine 65, cysteine 68, cysteine 215, and cysteine 270. The segment at 434–461 (LPGAKPAVRPAAGRRQPMSRNAVSTGSS) is disordered. A compositionally biased stretch (polar residues) spans 451–461 (MSRNAVSTGSS). Residues cysteine 473 and cysteine 477 each coordinate [4Fe-4S] cluster.

Belongs to the NARF family.

In terms of biological role, component of the cytosolic Fe/S protein assembly machinery. Required for maturation of extramitochondrial Fe/S proteins. May play a role in the transfer of pre-assembled Fe/S clusters to target apoproteins. This chain is Cytosolic Fe-S cluster assembly factor nar1 (nar1), found in Penicillium rubens (strain ATCC 28089 / DSM 1075 / NRRL 1951 / Wisconsin 54-1255) (Penicillium chrysogenum).